A 387-amino-acid polypeptide reads, in one-letter code: Phosphoglycerate kinase (387 aa).

Residues 21–23 (DLN), Arg-36, 59–62 (HLGR), Arg-113, and Arg-146 contribute to the substrate site. ATP is bound by residues Lys-197, Glu-314, and 340 to 343 (GGDT).

It belongs to the phosphoglycerate kinase family. Monomer.

It is found in the cytoplasm. It carries out the reaction (2R)-3-phosphoglycerate + ATP = (2R)-3-phospho-glyceroyl phosphate + ADP. The protein operates within carbohydrate degradation; glycolysis; pyruvate from D-glyceraldehyde 3-phosphate: step 2/5. This chain is Phosphoglycerate kinase, found in Yersinia enterocolitica serotype O:8 / biotype 1B (strain NCTC 13174 / 8081).